The chain runs to 391 residues: 3-ketoacyl-CoA thiolase (391 aa).

The active-site Acyl-thioester intermediate is cysteine 95. Catalysis depends on proton acceptor residues histidine 347 and cysteine 377.

It belongs to the thiolase-like superfamily. Thiolase family. In terms of assembly, heterotetramer of two alpha chains (FadB) and two beta chains (FadA).

Its subcellular location is the cytoplasm. It carries out the reaction an acyl-CoA + acetyl-CoA = a 3-oxoacyl-CoA + CoA. It functions in the pathway lipid metabolism; fatty acid beta-oxidation. Catalyzes the final step of fatty acid oxidation in which acetyl-CoA is released and the CoA ester of a fatty acid two carbons shorter is formed. This chain is 3-ketoacyl-CoA thiolase, found in Pseudomonas putida (strain ATCC 700007 / DSM 6899 / JCM 31910 / BCRC 17059 / LMG 24140 / F1).